The primary structure comprises 526 residues: Serine/threonine-protein kinase ppk22 (526 aa).

Disordered stretches follow at residues 1–24 and 39–106; these read MARE…QSHF and AATV…PRPL. Residues 10–23 show a composition bias toward polar residues; sequence KSPSSTDDGMSQSH. Positions 65-78 are enriched in low complexity; it reads NQLNELDLNDSSDQ. Position 154 is a phosphoserine (Ser-154). One can recognise a Protein kinase domain in the interval 155-445; sequence FEKIRLLGQG…ASDIKQHPFF (291 aa). Residues 161–169 and Lys-184 each bind ATP; that span reads LGQGDVGKV. The active-site Proton acceptor is Asp-280. Residue Thr-339 is modified to Phosphothreonine. Ser-341 carries the post-translational modification Phosphoserine. Tyr-348 carries the phosphotyrosine modification. Residues 446-526 enclose the AGC-kinase C-terminal domain; sequence RHIQWALLRS…SVTLHHAGDE (81 aa). The disordered stretch occupies residues 499 to 526; the sequence is MHSSTPVNEQSNPFDSFSSVTLHHAGDE. Polar residues predominate over residues 500–519; the sequence is HSSTPVNEQSNPFDSFSSVT.

Belongs to the protein kinase superfamily. AGC Ser/Thr protein kinase family.

It localises to the cytoplasm. The catalysed reaction is L-seryl-[protein] + ATP = O-phospho-L-seryl-[protein] + ADP + H(+). It carries out the reaction L-threonyl-[protein] + ATP = O-phospho-L-threonyl-[protein] + ADP + H(+). This Schizosaccharomyces pombe (strain 972 / ATCC 24843) (Fission yeast) protein is Serine/threonine-protein kinase ppk22 (ppk22).